The primary structure comprises 350 residues: MEVRHNWTHAEVRDLMEKPFMDLLFEAQLVHRQYQQTNHVQVSTLLSIKTGACPEDCKYCPQSARYTTDIEKERLMEVERVLDAAQKAKNAGSTRFCMGAAWKNPKERDMPHLTDMIKGVKDMGLETCMTLGMLTPEQAKQLANAGLDYYNHNLDTSPEFYGNIITTRTYQDRLDTLSHVRDAGMKICSGGIIGMGESANDRAGLLVELANLPTHPESVPINMLVKVKGTPLETVDDVDPFDFIRLIAIARIMMPQSAVRLSAGRENMNEQMQALCFMAGANSVFYGCKLLTTPNPSEDKDMMLFKKLGINSQEVSQKPDEIEENELLDRVVERVAARPTKDDLFYDASV.

The Radical SAM core domain occupies 38–256; it reads NHVQVSTLLS…IAIARIMMPQ (219 aa). The [4Fe-4S] cluster site is built by Cys-53, Cys-57, and Cys-60. Residues Cys-97, Cys-128, Cys-188, and Arg-260 each coordinate [2Fe-2S] cluster.

Belongs to the radical SAM superfamily. Biotin synthase family. In terms of assembly, homodimer. [4Fe-4S] cluster serves as cofactor. Requires [2Fe-2S] cluster as cofactor.

The catalysed reaction is (4R,5S)-dethiobiotin + (sulfur carrier)-SH + 2 reduced [2Fe-2S]-[ferredoxin] + 2 S-adenosyl-L-methionine = (sulfur carrier)-H + biotin + 2 5'-deoxyadenosine + 2 L-methionine + 2 oxidized [2Fe-2S]-[ferredoxin]. It functions in the pathway cofactor biosynthesis; biotin biosynthesis; biotin from 7,8-diaminononanoate: step 2/2. Functionally, catalyzes the conversion of dethiobiotin (DTB) to biotin by the insertion of a sulfur atom into dethiobiotin via a radical-based mechanism. The chain is Biotin synthase from Vibrio parahaemolyticus serotype O3:K6 (strain RIMD 2210633).